We begin with the raw amino-acid sequence, 627 residues long: Siderophore iron transporter ARN1 (627 aa).

The Extracellular portion of the chain corresponds to 1–70 (MESVHSRDPV…TEIIGSAYNK (70 aa)). Residues 71–91 (WYLQAILLLSAFICGYGYGLD) traverse the membrane as a helical segment. The Cytoplasmic segment spans residues 92 to 110 (GNIRYIYTGYATSSYSEHS). Residues 111 to 131 (LLSTINVINAVVSAASQIIYA) form a helical membrane-spanning segment. The Extracellular segment spans residues 132–135 (RLSD). A helical membrane pass occupies residues 136-156 (VFGRLYLFISAVILYVVGTII). At 157 to 167 (QSQAYDVQRYA) the chain is on the cytoplasmic side. The chain crosses the membrane as a helical span at residues 168 to 188 (AGAIFYNAGYVGVILILLIIL). Over 189 to 197 (SDFSSLKWR) the chain is Extracellular. Residues 198–218 (LLYQFVPTWPFIINTWIAGNI) form a helical membrane-spanning segment. Over 219–231 (TSRANPVVNWSWD) the chain is Cytoplasmic. The helical transmembrane segment at 232–252 (VGMWAFIFPLSCVPIVLCMLH) threads the bilayer. Residues 253–290 (MQWRARKTPEWHALKGQKSYYQEHGFIKILKQLFWMLD) are Extracellular-facing. Residues 291–311 (VVGVLLMGCSLGCILVPLTLA) traverse the membrane as a helical segment. At 312–323 (GGVKTTWNDSRL) the chain is on the cytoplasmic side. A helical transmembrane segment spans residues 324-344 (IGPFVLGFVLIPILWIWEYRF). Topologically, residues 345–367 (ARDPILPYRLVKDRAVWSSMGIS) are extracellular. A helical membrane pass occupies residues 368 to 388 (FLIDFIYYMAADYLYTVMIVA). The Cytoplasmic segment spans residues 389–398 (VNESVKSATR). A helical transmembrane segment spans residues 399-419 (IATLSSFVSTVASPFFALLVT). The Extracellular portion of the chain corresponds to 420 to 424 (RCTRL). The helical transmembrane segment at 425-445 (KPFIMFGCALWMVAMGLLYHF) threads the bilayer. The Cytoplasmic portion of the chain corresponds to 446–454 (RGGSQSHSG). The helical transmembrane segment at 455–475 (IIGALCVWGVGTTLFTYPVTV) threads the bilayer. The Extracellular portion of the chain corresponds to 476–563 (SVQSAVSHEN…LMNAYKYVQR (88 aa)). Residues 564-584 (LETIVALVFCVPLIAFSLCLR) traverse the membrane as a helical segment. The Cytoplasmic portion of the chain corresponds to 585–627 (DPKLTDTVAVEYIEDGEYVDTKDNDPILDWFEKLPSKFTFKRE).

The protein belongs to the major facilitator superfamily.

Its subcellular location is the cell membrane. The protein localises to the endosome membrane. Its function is as follows. Involved in the transport of siderophore ferrichrome and so has a role in iron homeostasis. In Saccharomyces cerevisiae (strain ATCC 204508 / S288c) (Baker's yeast), this protein is Siderophore iron transporter ARN1 (ARN1).